The following is a 268-amino-acid chain: Ribosome maturation factor RimP (268 aa).

Disordered stretches follow at residues 1–41 (MGSA…GRGG) and 223–268 (LVEP…EMTR). Positions 32–41 (PSGSARGRGG) are enriched in low complexity. A compositionally biased stretch (basic and acidic residues) spans 248 to 257 (ESNDDGREAG).

The protein belongs to the RimP family.

The protein resides in the cytoplasm. Required for maturation of 30S ribosomal subunits. In Frankia casuarinae (strain DSM 45818 / CECT 9043 / HFP020203 / CcI3), this protein is Ribosome maturation factor RimP.